The primary structure comprises 149 residues: Tetracenomycin polyketide synthase protein TcmJ (149 aa).

Positions 51 to 117 (HIELAPGESV…NRGNVPARVV (67 aa)) constitute a Cupin type-2 domain. Positions 127–149 (PELGHVDTEPVPNPAAAPPKVGG) are disordered.

The tetracenomycin polyketide synthase (TCM PKS) is composed of a ketosynthase complex (TcmKL), an acyl carrier protein (TcmM), a cyclase (TcmN) and a probable second cyclase (TcmJ).

It catalyses the reaction 10 malonyl-CoA + 8 H(+) = tetracenomycin F2 + 10 CO2 + 10 CoA + 2 H2O. It functions in the pathway antibiotic biosynthesis; tetracenomycin C biosynthesis. Its function is as follows. Involved in the biosynthesis of tetracenomycin C (TCM C). Part of a type II polyketide synthase (PKS) that catalyzes the synthesis of tetracenomycin F2 (TCM F2), a precursor of TCM C, from malonyl-CoA. TcmJ, while not absolutely required, greatly increases the tetracenomycin F2 production. It probably acts as a cyclase. The polypeptide is Tetracenomycin polyketide synthase protein TcmJ (Streptomyces glaucescens).